The sequence spans 414 residues: Transmembrane protein 184A (414 aa).

Residues Met-1 to Ser-32 are disordered. 7 helical membrane-spanning segments follow: residues Val-48–Leu-68, Leu-83–Gly-103, Phe-120–Met-140, Leu-177–Gly-197, Leu-211–Phe-231, Phe-248–Leu-268, and Val-290–Leu-310. Disordered stretches follow at residues Thr-323 to Glu-342 and Tyr-364 to Leu-414. Positions Ser-379 to His-388 are enriched in polar residues.

The protein belongs to the TMEM184 family. As to expression, expressed in vascular cells (at protein level).

The protein localises to the cell membrane. Its subcellular location is the cytoplasm. It is found in the perinuclear region. The protein resides in the cytoplasmic vesicle membrane. It localises to the early endosome membrane. The protein localises to the endosome. Its subcellular location is the cytoplasmic vesicle. It is found in the secretory vesicle membrane. In terms of biological role, acts as a heparin receptor in vascular cells. May be involved in vesicle transport in exocrine cells and Sertoli cells. This chain is Transmembrane protein 184A (TMEM184A), found in Bos taurus (Bovine).